Here is a 915-residue protein sequence, read N- to C-terminus: DNA (cytosine-5)-methyltransferase 2 (915 aa).

Residues 1–14 are compositionally biased toward low complexity; it reads MAPSSPSSARPTRA. Residues 1 to 171 are disordered; it reads MAPSSPSSAR…STAANKPEED (171 aa). A compositionally biased stretch (basic and acidic residues) spans 15 to 30; that stretch reads SGRERSAMAEEIHQNQ. Positions 42 to 57 are enriched in basic residues; sequence AKRRRKAASSGKKPKP. The segment covering 71-80 has biased composition (basic and acidic residues); it reads KKGETEKTEP. The span at 81–108 shows a compositional bias: acidic residues; the sequence is VVDDVCAEEPDEEELAMGEEEAEAEEQA. Positions 109-119 are enriched in low complexity; sequence MQEVVAAVAAG. A BAH domain is found at 188–313; sequence IVYCLGDDVY…VAYSTFANIS (126 aa). Over residues 315–328 the composition is skewed to polar residues; sequence ENGQSGSETASGIS. The interval 315 to 338 is disordered; the sequence is ENGQSGSETASGISSDDAGLETSS. The SAM-dependent MTase C5-type domain maps to 345-876; the sequence is ATLLDLYSGC…YCLGQAYLGE (532 aa). In terms of domain architecture, Chromo spans 445–508; that stretch reads FVVQKLIGIR…EGRKRKILPL (64 aa). Cysteine 521 is an active-site residue.

Belongs to the class I-like SAM-binding methyltransferase superfamily. C5-methyltransferase family.

The protein resides in the nucleus. The enzyme catalyses a 2'-deoxycytidine in DNA + S-adenosyl-L-methionine = a 5-methyl-2'-deoxycytidine in DNA + S-adenosyl-L-homocysteine + H(+). Its function is as follows. May be involved in the CpXpG methylation and in gene silencing. The sequence is that of DNA (cytosine-5)-methyltransferase 2 (ZMET5) from Zea mays (Maize).